The sequence spans 394 residues: ATP phosphoribosyltransferase regulatory subunit (394 aa).

It belongs to the class-II aminoacyl-tRNA synthetase family. HisZ subfamily. Heteromultimer composed of HisG and HisZ subunits.

It localises to the cytoplasm. The protein operates within amino-acid biosynthesis; L-histidine biosynthesis; L-histidine from 5-phospho-alpha-D-ribose 1-diphosphate: step 1/9. Required for the first step of histidine biosynthesis. May allow the feedback regulation of ATP phosphoribosyltransferase activity by histidine. In Saccharophagus degradans (strain 2-40 / ATCC 43961 / DSM 17024), this protein is ATP phosphoribosyltransferase regulatory subunit.